The primary structure comprises 449 residues: Na(+)/H(+) antiporter NhaA (449 aa).

12 helical membrane passes run 30-50, 69-89, 112-132, 138-158, 168-188, 192-212, 218-238, 241-261, 312-332, 348-368, 386-406, and 419-439; these read IFLI…WAGA, FGLT…FLVA, LLAA…LNLG, GWGI…GLLG, FLIA…ALFY, LSWI…LMNW, LIWY…SGIH, IAGV…SKIL, SLVD…NAGV, LGIL…FTLI, IIGI…ITNL, and ISIL…LLLT.

This sequence belongs to the NhaA Na(+)/H(+) (TC 2.A.33) antiporter family.

The protein resides in the cell inner membrane. The catalysed reaction is Na(+)(in) + 2 H(+)(out) = Na(+)(out) + 2 H(+)(in). Functionally, na(+)/H(+) antiporter that extrudes sodium in exchange for external protons. The sequence is that of Na(+)/H(+) antiporter NhaA from Christiangramia forsetii (strain DSM 17595 / CGMCC 1.15422 / KT0803) (Gramella forsetii).